A 971-amino-acid polypeptide reads, in one-letter code: Exportin-2 (971 aa).

Position 1 is an N-acetylmethionine (Met1). The region spanning 29 to 102 is the Importin N-terminal domain; it reads AEKFLESVEG…KANIVHLMLS (74 aa). Position 112 is a phosphoserine (Ser112). Residues Lys574 and Lys824 each carry the N6-acetyllysine modification. At Ser931 the chain carries Phosphoserine.

This sequence belongs to the XPO2/CSE1 family. In terms of assembly, found in a complex with CSE1L/XPO2, Ran and KPNA2. Binds with high affinity to importin-alpha only in the presence of RanGTP. The complex is dissociated by the combined action of RanBP1 and RanGAP1. Interacts with CFTR. As to expression, detected in brain, placenta, ovary, testis and trachea (at protein level). Widely expressed. Highly expressed in testis and in proliferating cells.

Its subcellular location is the cytoplasm. It localises to the nucleus. Its function is as follows. Export receptor for importin-alpha. Mediates importin-alpha re-export from the nucleus to the cytoplasm after import substrates (cargos) have been released into the nucleoplasm. In the nucleus binds cooperatively to importin-alpha and to the GTPase Ran in its active GTP-bound form. Docking of this trimeric complex to the nuclear pore complex (NPC) is mediated through binding to nucleoporins. Upon transit of a nuclear export complex into the cytoplasm, disassembling of the complex and hydrolysis of Ran-GTP to Ran-GDP (induced by RANBP1 and RANGAP1, respectively) cause release of the importin-alpha from the export receptor. CSE1L/XPO2 then return to the nuclear compartment and mediate another round of transport. The directionality of nuclear export is thought to be conferred by an asymmetric distribution of the GTP- and GDP-bound forms of Ran between the cytoplasm and nucleus. In Homo sapiens (Human), this protein is Exportin-2 (CSE1L).